The sequence spans 123 residues: MSAEVKAAVARYLDAVAGGSPAAIAALYAPDATLEDPVGADLVRGRAAIEEFYGALAGAKVSTELLAVRAVAGHAAFSFRVTTDAGDQQYVVEPIDVMTFDADGQITSMRAFWAPGDMVVTPA.

Tyr-12 acts as the Proton donor in catalysis. Asp-36 (proton acceptor) is an active-site residue. Asp-96 contacts substrate.

Homodimer.

The catalysed reaction is a 3-oxo-Delta(5)-steroid = a 3-oxo-Delta(4)-steroid. The protein is Steroid Delta-isomerase (ksdI) of Nocardioides simplex (Arthrobacter simplex).